The chain runs to 427 residues: MTWFIDRRLNGKNKSMVNRQRFLRRYKAQIKQSISEAINKRSVTDVDSGESVSIPTEDISEPMFHQGRGGLRHRVHPGNDHFVQNDRIERPQGGGGGSGSGQGQASQDGEGQDEFVFQISKDEYLDLLFEDLALPNLKQNQQRQLTEYKTHRAGYTANGVPANISVVRSLQNSLARRTAMTAGKRRELHALEENLAIISNSEPAQLLEEERLRKEIAELRAKIERVPFIDTFDLRYKNYEKRPDPSSQAVMFCLMDVSGSMDQSTKDMAKRFYILLYLFLSRTYKNVEVVYIRHHTQAKEVDEHEFFYSQETGGTIVSSALKLMDEVVKERYNPAQWNIYAAQASDGDNWADDSPLCHEILAKKLLPVVRYYSYIEITRRAHQTLWREYEHLQSTFDNFAMQHIRDQDDIYPVFRELFHKQNATAKD.

The span at 79–90 (NDHFVQNDRIER) shows a compositional bias: basic and acidic residues. The interval 79-110 (NDHFVQNDRIERPQGGGGGSGSGQGQASQDGE) is disordered. Residues 92–102 (QGGGGGSGSGQ) are compositionally biased toward gly residues.

The protein belongs to the UPF0229 family.

This chain is UPF0229 protein YeaH, found in Escherichia coli O139:H28 (strain E24377A / ETEC).